The sequence spans 982 residues: E3 ubiquitin-protein ligase CBL-B (982 aa).

The span at 1 to 14 (MASSSSSSSSTNSS) shows a compositional bias: low complexity. The interval 1 to 25 (MASSSSSSSSTNSSAVTGRLPGARS) is disordered. Residues 46 to 178 (PPKQAAADRR…KAIFPSGQFQ (133 aa)) form a 4H region. Residues 46–354 (PPKQAAADRR…GRSYNPDLTD (309 aa)) enclose the Cbl-PTB domain. The tract at residues 179–251 (GDNFRITKAD…FEFDIFTRLF (73 aa)) is EF-hand-like. The Ca(2+) site is built by Asp-232, Thr-234, Asn-236, Tyr-238, and Glu-243. The tract at residues 252–354 (QPWTSILRNW…GRSYNPDLTD (103 aa)) is SH2-like. Arg-297 is a binding site for 4-O-phospho-L-tyrosine. Positions 355–383 (LCEPTPHDHIKVTQEQYELYCEMGSTFQL) are linker. An RING-type zinc finger spans residues 384 to 423 (CKICAENDKDVKIEPCGHLMCTSCLTSWQESDGQGCPFCR). Disordered stretches follow at residues 480 to 582 (MNER…RTCR), 709 to 728 (VRNS…SHPV), and 766 to 911 (LKQP…PVPR). Over residues 483-497 (RQNSPVTSPGSSPLS) the composition is skewed to polar residues. Positions 554–576 (LPAPPPPLREPPPPPERPPPIPP) are enriched in pro residues. The segment covering 825–834 (PSQPPPPPPA) has biased composition (pro residues). Residues 927–970 (SLAENVDAKIAKLMGEGFPFEEVKRALEIAQNNVDVARSILREF) enclose the UBA domain.

In terms of assembly, interacts with several SH3 domain-containing proteins and with poly-ubiquitinated proteins.

It is found in the cytoplasm. It carries out the reaction S-ubiquitinyl-[E2 ubiquitin-conjugating enzyme]-L-cysteine + [acceptor protein]-L-lysine = [E2 ubiquitin-conjugating enzyme]-L-cysteine + N(6)-ubiquitinyl-[acceptor protein]-L-lysine.. It participates in protein modification; protein ubiquitination. E3 ubiquitin-protein ligase which accepts ubiquitin from specific E2 ubiquitin-conjugating enzymes, and transfers it to substrates, generally promoting their degradation by the proteasome. This is E3 ubiquitin-protein ligase CBL-B (cblb) from Xenopus tropicalis (Western clawed frog).